Consider the following 712-residue polypeptide: Polyribonucleotide nucleotidyltransferase (712 aa).

The Mg(2+) site is built by Asp-487 and Asp-493. One can recognise a KH domain in the interval 554–613; it reads PKIITMTINPDKIRDVIGPSGKQINKIIEETGVKIDIEQDGTVFISSINQEMNDKAKKII. The region spanning 623–691 is the S1 motif domain; it reads GEIYEGKVKR…KQGRVNLSRK (69 aa).

It belongs to the polyribonucleotide nucleotidyltransferase family. Mg(2+) is required as a cofactor.

The protein localises to the cytoplasm. The enzyme catalyses RNA(n+1) + phosphate = RNA(n) + a ribonucleoside 5'-diphosphate. In terms of biological role, involved in mRNA degradation. Catalyzes the phosphorolysis of single-stranded polyribonucleotides processively in the 3'- to 5'-direction. In Bacillus cereus (strain ATCC 10987 / NRS 248), this protein is Polyribonucleotide nucleotidyltransferase.